The sequence spans 215 residues: Cytochrome b6 (215 aa).

Residues Ile-32–Phe-52 form a helical membrane-spanning segment. Cys-35 contributes to the heme c binding site. Heme b-binding residues include His-86 and His-100. Transmembrane regions (helical) follow at residues Ala-90–Phe-110, Leu-116–Tyr-136, and Leu-186–Ile-206. Residues His-187 and His-202 each contribute to the heme b site.

The protein belongs to the cytochrome b family. PetB subfamily. In terms of assembly, the 4 large subunits of the cytochrome b6-f complex are cytochrome b6, subunit IV (17 kDa polypeptide, PetD), cytochrome f and the Rieske protein, while the 4 small subunits are PetG, PetL, PetM and PetN. The complex functions as a dimer. The cofactor is heme b. Requires heme c as cofactor.

The protein localises to the cellular thylakoid membrane. In terms of biological role, component of the cytochrome b6-f complex, which mediates electron transfer between photosystem II (PSII) and photosystem I (PSI), cyclic electron flow around PSI, and state transitions. The polypeptide is Cytochrome b6 (Synechococcus sp. (strain JA-3-3Ab) (Cyanobacteria bacterium Yellowstone A-Prime)).